Reading from the N-terminus, the 244-residue chain is Transcriptional activator protein CarR (244 aa).

One can recognise an HTH luxR-type domain in the interval 162–227 (DNSRNALLSP…HAITKALELN (66 aa)). The segment at residues 186–205 (YKEVSRILGISEVTVKFHIN) is a DNA-binding region (H-T-H motif).

The protein belongs to the autoinducer-regulated transcriptional regulatory protein family.

Functions as an OHLL responsive transcriptional regulator which acts in the control of the biosynthesis of carbapenem antibiotics. This chain is Transcriptional activator protein CarR (carR), found in Pectobacterium carotovorum subsp. carotovorum (Erwinia carotovora subsp. carotovora).